A 201-amino-acid chain; its full sequence is Imidazole glycerol phosphate synthase subunit HisH 1 (201 aa).

The Glutamine amidotransferase type-1 domain occupies 1–201 (MIALIDYKAG…LKLLENFIRL (201 aa)). The Nucleophile role is filled by Cys-80. Catalysis depends on residues His-183 and Glu-185.

As to quaternary structure, heterodimer of HisH and HisF.

The protein resides in the cytoplasm. It catalyses the reaction 5-[(5-phospho-1-deoxy-D-ribulos-1-ylimino)methylamino]-1-(5-phospho-beta-D-ribosyl)imidazole-4-carboxamide + L-glutamine = D-erythro-1-(imidazol-4-yl)glycerol 3-phosphate + 5-amino-1-(5-phospho-beta-D-ribosyl)imidazole-4-carboxamide + L-glutamate + H(+). The enzyme catalyses L-glutamine + H2O = L-glutamate + NH4(+). Its pathway is amino-acid biosynthesis; L-histidine biosynthesis; L-histidine from 5-phospho-alpha-D-ribose 1-diphosphate: step 5/9. IGPS catalyzes the conversion of PRFAR and glutamine to IGP, AICAR and glutamate. The HisH subunit provides the glutamine amidotransferase activity that produces the ammonia necessary to HisF for the synthesis of IGP and AICAR. The sequence is that of Imidazole glycerol phosphate synthase subunit HisH 1 from Campylobacter jejuni (strain RM1221).